Reading from the N-terminus, the 546-residue chain is T-complex protein 1 subunit epsilon (546 aa).

Belongs to the TCP-1 chaperonin family. In terms of assembly, heterooligomeric complex of about 850 to 900 kDa that forms two stacked rings, 12 to 16 nm in diameter.

The protein localises to the cytoplasm. Its function is as follows. Molecular chaperone; assists the folding of proteins upon ATP hydrolysis. Known to play a role, in vitro, in the folding of actin and tubulin. The chain is T-complex protein 1 subunit epsilon (cct5) from Schizosaccharomyces pombe (strain 972 / ATCC 24843) (Fission yeast).